A 188-amino-acid polypeptide reads, in one-letter code: Small ribosomal subunit protein uS7 (188 aa).

Belongs to the universal ribosomal protein uS7 family. In terms of assembly, part of the 30S ribosomal subunit.

Functionally, one of the primary rRNA binding proteins, it binds directly to 16S rRNA where it nucleates assembly of the head domain of the 30S subunit. Is located at the subunit interface close to the decoding center. The chain is Small ribosomal subunit protein uS7 from Methanococcus maripaludis (strain C7 / ATCC BAA-1331).